A 740-amino-acid chain; its full sequence is ATP-dependent DNA helicase Hel308 (740 aa).

ATP is bound by residues Gln-28 and 46–53 (IPTASGKT). The Helicase ATP-binding domain maps to 33 to 204 (RQGLLDGKNL…WMDAALVQSE (172 aa)). The DEAH box signature appears at 149–152 (DEVH). In terms of domain architecture, Helicase C-terminal spans 236 to 436 (EVNSLVADTL…EPAMRAHALS (201 aa)). A disordered region spans residues 716 to 740 (VDHTPPETEEQPQVSGQSTLFSFDG). A compositionally biased stretch (polar residues) spans 726–740 (QPQVSGQSTLFSFDG).

This sequence belongs to the helicase family. Hel308 subfamily. As to quaternary structure, monomer.

It catalyses the reaction Couples ATP hydrolysis with the unwinding of duplex DNA by translocating in the 3'-5' direction.. It carries out the reaction ATP + H2O = ADP + phosphate + H(+). Functionally, DNA-dependent ATPase and 3'-5' DNA helicase that may be involved in repair of stalled replication forks. The sequence is that of ATP-dependent DNA helicase Hel308 from Methanocella arvoryzae (strain DSM 22066 / NBRC 105507 / MRE50).